We begin with the raw amino-acid sequence, 254 residues long: Ribonuclease HII (254 aa).

The RNase H type-2 domain maps to 46–234 (KLIAGIDEVG…VWMASAPQEV (189 aa)). D52, E53, and D144 together coordinate a divalent metal cation.

The protein belongs to the RNase HII family. Requires Mn(2+) as cofactor. Mg(2+) serves as cofactor.

It localises to the cytoplasm. The enzyme catalyses Endonucleolytic cleavage to 5'-phosphomonoester.. Endonuclease that specifically degrades the RNA of RNA-DNA hybrids. In Koribacter versatilis (strain Ellin345), this protein is Ribonuclease HII.